The primary structure comprises 260 residues: Global transcriptional regulator CodY (260 aa).

The segment at 1–159 (MPNLLEKTRK…SSTVVGIQLL (159 aa)) is GAF domain. The segment at residues 207–226 (ASVIADRIGITRSVIVNALR) is a DNA-binding region (H-T-H motif).

The protein belongs to the CodY family.

It is found in the cytoplasm. Functionally, DNA-binding global transcriptional regulator which is involved in the adaptive response to starvation and acts by directly or indirectly controlling the expression of numerous genes in response to nutrient availability. During rapid exponential growth, CodY is highly active and represses genes whose products allow adaptation to nutrient depletion. This is Global transcriptional regulator CodY from Streptococcus equi subsp. equi (strain 4047).